The following is a 201-amino-acid chain: MNKTNDNDIDQLIYLFSKLPGLGSRSARRIVLYLLQDKDVRLKSLINNLVEIDKKIVKCEICGNMDTENICCICSSEYRDKSVIAVVETVAELWAMERSSNFKGLYHVLGHNLSAASRQNPSILRLPELLKRCFAENIKEVIIATNSTLEGQTTAYFITEYLREHPAKISRLASGIPIGGELDYLDEGTLSAAINLRQPFE.

The C4-type zinc finger occupies 59 to 74 (CEICGNMDTENICCIC). A Toprim domain is found at 82–177 (SVIAVVETVA…KISRLASGIP (96 aa)).

Belongs to the RecR family.

May play a role in DNA repair. It seems to be involved in an RecBC-independent recombinational process of DNA repair. It may act with RecF and RecO. The sequence is that of Recombination protein RecR from Rickettsia felis (strain ATCC VR-1525 / URRWXCal2) (Rickettsia azadi).